A 487-amino-acid chain; its full sequence is Malonate-semialdehyde dehydrogenase (487 aa).

NAD(+)-binding residues include Ala-150, Phe-152, Lys-176, Glu-179, Arg-180, Ser-229, and Thr-251. Cys-284 serves as the catalytic Nucleophile. Residue Glu-382 coordinates NAD(+).

The protein belongs to the aldehyde dehydrogenase family. IolA subfamily. As to quaternary structure, homotetramer.

The enzyme catalyses 3-oxopropanoate + NAD(+) + CoA + H2O = hydrogencarbonate + acetyl-CoA + NADH + H(+). The catalysed reaction is 2-methyl-3-oxopropanoate + NAD(+) + CoA + H2O = propanoyl-CoA + hydrogencarbonate + NADH + H(+). It functions in the pathway polyol metabolism; myo-inositol degradation into acetyl-CoA; acetyl-CoA from myo-inositol: step 7/7. Functionally, catalyzes the oxidation of malonate semialdehyde (MSA) and methylmalonate semialdehyde (MMSA) into acetyl-CoA and propanoyl-CoA, respectively. Is involved in a myo-inositol catabolic pathway. Bicarbonate, and not CO2, is the end-product of the enzymatic reaction. In Bacillus subtilis (strain 168), this protein is Malonate-semialdehyde dehydrogenase.